A 279-amino-acid polypeptide reads, in one-letter code: HTH-type transcriptional regulator HdfR (279 aa).

In terms of domain architecture, HTH lysR-type spans 1-58; that stretch reads MDTELLKTFLEVSRTRHFGRAAESLYLTQSAVSFRIRQLENQLGVNLFTRHRNNIRLT. Positions 18 to 37 form a DNA-binding region, H-T-H motif; that stretch reads FGRAAESLYLTQSAVSFRIR.

The protein belongs to the LysR transcriptional regulatory family.

Its function is as follows. Negatively regulates the transcription of the flagellar master operon flhDC by binding to the upstream region of the operon. The chain is HTH-type transcriptional regulator HdfR from Shigella boydii serotype 18 (strain CDC 3083-94 / BS512).